The chain runs to 368 residues: DNA replication and repair protein RecF (368 aa).

Residue 30–37 (GDNGAGKT) participates in ATP binding.

The protein belongs to the RecF family.

Its subcellular location is the cytoplasm. Functionally, the RecF protein is involved in DNA metabolism; it is required for DNA replication and normal SOS inducibility. RecF binds preferentially to single-stranded, linear DNA. It also seems to bind ATP. This chain is DNA replication and repair protein RecF, found in Xanthomonas oryzae pv. oryzae (strain KACC10331 / KXO85).